A 337-amino-acid polypeptide reads, in one-letter code: Protein-arginine kinase (337 aa).

A Phosphagen kinase C-terminal domain is found at isoleucine 12 to glutamine 240. ATP is bound by residues alanine 15–lysine 19, arginine 162–phenylalanine 166, and lysine 193–serine 198.

The protein belongs to the ATP:guanido phosphotransferase family.

It catalyses the reaction L-arginyl-[protein] + ATP = N(omega)-phospho-L-arginyl-[protein] + ADP + H(+). Catalyzes the specific phosphorylation of arginine residues in proteins. The protein is Protein-arginine kinase of Clostridium perfringens (strain ATCC 13124 / DSM 756 / JCM 1290 / NCIMB 6125 / NCTC 8237 / Type A).